We begin with the raw amino-acid sequence, 501 residues long: Glycerol kinase (501 aa).

Threonine 14 contacts ADP. Threonine 14, threonine 15, and serine 16 together coordinate ATP. Residue threonine 14 coordinates sn-glycerol 3-phosphate. An ADP-binding site is contributed by arginine 18. 4 residues coordinate sn-glycerol 3-phosphate: arginine 84, glutamate 85, tyrosine 136, and aspartate 246. Positions 84, 85, 136, 246, and 247 each coordinate glycerol. ADP is bound by residues threonine 268 and glycine 311. Positions 268, 311, 315, and 412 each coordinate ATP. Residues glycine 412 and asparagine 416 each contribute to the ADP site.

Belongs to the FGGY kinase family. As to quaternary structure, homotetramer and homodimer (in equilibrium).

The enzyme catalyses glycerol + ATP = sn-glycerol 3-phosphate + ADP + H(+). It functions in the pathway polyol metabolism; glycerol degradation via glycerol kinase pathway; sn-glycerol 3-phosphate from glycerol: step 1/1. Its activity is regulated as follows. Activated by phosphorylation and inhibited by fructose 1,6-bisphosphate (FBP). Its function is as follows. Key enzyme in the regulation of glycerol uptake and metabolism. Catalyzes the phosphorylation of glycerol to yield sn-glycerol 3-phosphate. The sequence is that of Glycerol kinase from Desulforamulus reducens (strain ATCC BAA-1160 / DSM 100696 / MI-1) (Desulfotomaculum reducens).